Consider the following 682-residue polypeptide: Transcription factor 12 (682 aa).

A 9aaTAD motif is present at residues 19–27 (DLLDFSAMF). Disordered stretches follow at residues 25-122 (AMFS…LYSR), 140-219 (LGSP…PPTS), and 281-313 (SVSP…ASHT). Polar residues-rich tracts occupy residues 30-48 (PVNS…QFSG) and 56-76 (GTTS…SRGF). Residues S47, S67, and S79 each carry the phosphoserine modification. A compositionally biased stretch (basic and acidic residues) spans 81 to 93 (HYSDHLNDSRLGA). At S98 the chain carries Phosphoserine. Polar residues-rich tracts occupy residues 101–121 (PFMN…SLYS) and 144–163 (AQLS…SATS). Residue K110 forms a Glycyl lysine isopeptide (Lys-Gly) (interchain with G-Cter in SUMO2) linkage. Residue S116 is modified to Phosphoserine. The interval 119–140 (LYSRDTGLPGCQSSLLRQDLGL) is leucine-zipper. K181 is covalently cross-linked (Glycyl lysine isopeptide (Lys-Gly) (interchain with G-Cter in SUMO2)). Residues 182–196 (KVRKVPPGLPSSVYA) form an interaction with RUNX1T1 region. Positions 282–306 (VSPTDINTSLPPMSSFHRGSTSSSP) are enriched in polar residues. T313 is subject to Phosphothreonine. The residue at position 333 (S333) is a Phosphoserine. 2 disordered regions span residues 349–395 (PDHT…SLHS) and 462–580 (SASM…ERRM). Positions 352–363 (TSSSFPSNPSTP) are enriched in low complexity. Composition is skewed to polar residues over residues 364-376 (VGSP…TSQW) and 383-395 (APSS…SLHS). A compositionally biased stretch (low complexity) spans 481 to 492 (SVLSSTVTTSST). Residues 506–517 (LQSQSGTVVTTE) show a composition bias toward polar residues. Basic and acidic residues-rich tracts occupy residues 518–530 (IKTE…ENLH) and 536–551 (DDMK…DIKV). K519 participates in a covalent cross-link: Glycyl lysine isopeptide (Lys-Gly) (interchain with G-Cter in SUMO2). Phosphoserine is present on S540. K550 participates in a covalent cross-link: Glycyl lysine isopeptide (Lys-Gly) (interchain with G-Cter in SUMO2). Position 557 is a phosphothreonine (T557). Residues S558 and S559 each carry the phosphoserine modification. Over residues 568-580 (PEQKIEREKERRM) the composition is skewed to basic and acidic residues. A bHLH domain is found at 577–630 (ERRMANNARERLRVRDINEAFKELGRMCQLHLKSEKPQTKLLILHQAVAVILSL). Glycyl lysine isopeptide (Lys-Gly) (interchain with G-Cter in SUMO2) cross-links involve residues K609 and K653. The interval 632–655 (QQVRERNLNPKAACLKRREEEKVS) is class A specific domain. The interval 651–682 (EEKVSAVSAEPPTTLPGTHPGLSETTNPMGHM) is disordered. The span at 661–672 (PPTTLPGTHPGL) shows a compositional bias: low complexity. A compositionally biased stretch (polar residues) spans 673–682 (SETTNPMGHM).

As to quaternary structure, efficient DNA binding requires dimerization with another bHLH protein. Forms homo- or heterooligomers with myogenin, E12 and ITF2 proteins. Interacts with PTF1A. Interacts with NEUROD2. Interacts with RUNX1T1. Interacts with AML1-MTG8/ETO (via nervy homology region 2 in oligomerized form). Interacts with BHLHA9. As to expression, expressed in several tissues and cell types including skeletal muscle, thymus, and a B-cell line.

Its subcellular location is the nucleus. In terms of biological role, transcriptional regulator. Involved in the initiation of neuronal differentiation. Activates transcription by binding to the E box (5'-CANNTG-3'). May be involved in the functional network that regulates the development of the GnRH axis. The protein is Transcription factor 12 (TCF12) of Homo sapiens (Human).